The following is a 373-amino-acid chain: NK1 transcription factor-related protein 1 (373 aa).

Disordered regions lie at residues 49–74, 149–231, and 281–328; these read ALPA…TVHR, SDFT…RRAR, and KWKK…SMHT. Positions 53-63 are enriched in basic and acidic residues; that stretch reads ESRETSPRHEP. Over residues 168–177 the composition is skewed to polar residues; it reads EESSALTGNN. Positions 196-210 are enriched in low complexity; sequence GQQTQQSSSNGQNHQ. Residues 227-286 constitute a DNA-binding region (homeobox); that stretch reads PRRARTAFTYEQLVALENKFKSTRYLSVCERLNLALSLSLTETQVKIWFQNRRTKWKKQN. Residues 296–310 are compositionally biased toward gly residues; sequence SGGGGGNGPSNGLGG.

The protein belongs to the NK-1 homeobox family.

It localises to the nucleus. May participate in the energy homeostasis regulation. The chain is NK1 transcription factor-related protein 1 from Danio rerio (Zebrafish).